Consider the following 146-residue polypeptide: Metallothiol transferase FosB (146 aa).

The region spanning 4–120 is the VOC domain; that stretch reads GINHMTFSVS…DGHLLEVHTG (117 aa). Positions 7, 66, and 116 each coordinate Mg(2+). Glu-116 (proton donor/acceptor) is an active-site residue.

It belongs to the fosfomycin resistance protein family. FosB subfamily. In terms of assembly, homodimer. Mg(2+) serves as cofactor.

Its subcellular location is the cytoplasm. In terms of biological role, metallothiol transferase which confers resistance to fosfomycin by catalyzing the addition of a thiol cofactor to fosfomycin. L-cysteine is probably the physiological thiol donor. The chain is Metallothiol transferase FosB from Shouchella clausii (strain KSM-K16) (Alkalihalobacillus clausii).